Reading from the N-terminus, the 309-residue chain is Solute carrier family 25 member 48 (309 aa).

3 Solcar repeats span residues 3 to 86, 99 to 209, and 218 to 305; these read VFQL…TQRL, CSML…FCNW, and PPPC…SLQF. The next 6 membrane-spanning stretches (helical) occupy residues 9 to 29, 61 to 81, 105 to 125, 186 to 206, 218 to 238, and 281 to 299; these read FLAGWIGGASSVIVGHPLDTV, GLSFPLASITLYNSMVFGFFS, TVASMLTGLVSVGVGAPVDLV, GAMILRDIPGYALYFIPYTLF, PPPCCIWLAGGLAGSISWVTA, and ATVNAIRGFPMCATMFLGY.

The protein belongs to the mitochondrial carrier (TC 2.A.29) family.

It localises to the mitochondrion inner membrane. The sequence is that of Solute carrier family 25 member 48 (slc25a48) from Danio rerio (Zebrafish).